The following is a 350-amino-acid chain: Bifunctional nitrilase/nitrile hydratase NIT4B (350 aa).

The region spanning 30–302 (VRATVVQAST…EALISADLDL (273 aa)) is the CN hydrolase domain. The active-site Proton acceptor is Glu70. Lys157 is an active-site residue. The active-site Nucleophile is the Cys191.

It belongs to the carbon-nitrogen hydrolase superfamily. Nitrilase family. In terms of tissue distribution, highly expressed in leaves and cotyledons, lower expression in stems and roots.

It catalyses the reaction L-asparagine = 3-cyano-L-alanine + H2O. The enzyme catalyses 3-cyano-L-alanine + 2 H2O = L-aspartate + NH4(+). In terms of biological role, involved in the cyanide detoxification pathway. Has nitrilase and nitrile-hydratase activity in the ratio 3.3:1, producing both asparagine and aspartic acid from beta-cyano-L-alanine (Ala(CN)). Can also use 3-phenylpropionitrile as substrate, but not indole-3-acetonitrile. This Lupinus angustifolius (Narrow-leaved blue lupine) protein is Bifunctional nitrilase/nitrile hydratase NIT4B (NIT4B).